Reading from the N-terminus, the 239-residue chain is Probable transcriptional regulatory protein BT9727_0453 (239 aa).

This sequence belongs to the TACO1 family. YeeN subfamily.

It is found in the cytoplasm. The sequence is that of Probable transcriptional regulatory protein BT9727_0453 from Bacillus thuringiensis subsp. konkukian (strain 97-27).